The chain runs to 228 residues: ATP synthase F(0) complex subunit a (228 aa).

6 helical membrane passes run 13–33 (YFLGFPLMIFIAILISLTMFI), 70–90 (WALLLMTTLMFIFLNNITGLL), 100–120 (LSLNMAMAIPLWLGTIIMGAT), 140–160 (APFLIVIESISIIIRPLALGV), 162–182 (LTANITAGHLLIHLVSLALIN), and 190–210 (LFLTFSVFILLLILELAVSFI).

The protein belongs to the ATPase A chain family. Component of the ATP synthase complex composed at least of ATP5F1A/subunit alpha, ATP5F1B/subunit beta, ATP5MC1/subunit c (homooctomer), MT-ATP6/subunit a, MT-ATP8/subunit 8, ATP5ME/subunit e, ATP5MF/subunit f, ATP5MG/subunit g, ATP5MK/subunit k, ATP5MJ/subunit j, ATP5F1C/subunit gamma, ATP5F1D/subunit delta, ATP5F1E/subunit epsilon, ATP5PF/subunit F6, ATP5PB/subunit b, ATP5PD/subunit d, ATP5PO/subunit OSCP. ATP synthase complex consists of a soluble F(1) head domain (subunits alpha(3) and beta(3)) - the catalytic core - and a membrane F(0) domain - the membrane proton channel (subunits c, a, 8, e, f, g, k and j). These two domains are linked by a central stalk (subunits gamma, delta, and epsilon) rotating inside the F1 region and a stationary peripheral stalk (subunits F6, b, d, and OSCP). Interacts with DNAJC30; interaction is direct.

It is found in the mitochondrion inner membrane. It catalyses the reaction H(+)(in) = H(+)(out). Functionally, subunit a, of the mitochondrial membrane ATP synthase complex (F(1)F(0) ATP synthase or Complex V) that produces ATP from ADP in the presence of a proton gradient across the membrane which is generated by electron transport complexes of the respiratory chain. ATP synthase complex consist of a soluble F(1) head domain - the catalytic core - and a membrane F(1) domain - the membrane proton channel. These two domains are linked by a central stalk rotating inside the F(1) region and a stationary peripheral stalk. During catalysis, ATP synthesis in the catalytic domain of F(1) is coupled via a rotary mechanism of the central stalk subunits to proton translocation. With the subunit c (ATP5MC1), forms the proton-conducting channel in the F(0) domain, that contains two crucial half-channels (inlet and outlet) that facilitate proton movement from the mitochondrial intermembrane space (IMS) into the matrix. Protons are taken up via the inlet half-channel and released through the outlet half-channel, following a Grotthuss mechanism. In Myxine glutinosa (Atlantic hagfish), this protein is ATP synthase F(0) complex subunit a.